We begin with the raw amino-acid sequence, 845 residues long: MPLSYQHFRKLLLLDDGTEAGPLEEELPRLADADLNRRVAEDLNLGNLNVSIPWTHKVGNFTGLYSSTAPIFNPEWQTPSFPKIHLQEDIINRCQQFVGPLTVNEKRRLKLIMPARFYPTHTKYLPLDKGIKPYYPDQVVNHYFQTRHYLHTLWKAGILYKRETTRSASFCGSPYSWEQELQHGRLVIKTSQRHGDESFCSQPSGILSRSSVGPCIRSQLKQSRLGLQPHQGPLASSQPGRSGSIRARVHPSTRRCFGVEPSGSGHVDPSVNNSSSCLRQSAVRKAAYSHLSTSKRQSSSGHAVEFHCLPPSSARPQSQGSVFSCWWLQFRNSKPCSEYCLSHLVNLREDRGPCDEHGEHHIRIPRTPARVTGGVFLVDKNPHNTAESRLVVDFSQFSRGITRVSWPKFAIPNLQSLTNLLSSNLSWLSLDVSAAFYHIPLHPAAMPHLLIGSSGLSRYVARLSSNSRINNNQYGTMQNLHDSCSRQLYVSLMLLYKTYGWKLHLYSHPIVLGFRKIPMGVGLSPFLLAQFTSAICSVVRRAFPHCLAFSYMDDVVLGAKSVQHREFLYTAVTNFLLSLGIHLNPNKTKRWGYSLNFMGYVIGSWGTLPQDHIVQKIKHCFRKLPVNRPIDWKVCQRIVGLLGFAAPFTQCGYPALMPLYACIQAKQAFTFSPTYKAFLSKQYMNLYPVARQRPGLCQVFADATPTGWGLAIGHQRMRGTFVAPLPIHTAELLAACFARSRSGAKLIGTDNSVVLSRKYTSFPWLLGCAANWILRGTSFVYVPSALNPADDPSRGRLGLSRPLLRLPFQPTTGRTSLYAVSPSVPSHLPVRVHFASPLHVAWRPP.

Positions 1 to 179 (MPLSYQHFRK…FCGSPYSWEQ (179 aa)) are terminal protein domain (TP). Residues 180 to 348 (ELQHGRLVIK…YCLSHLVNLR (169 aa)) form a spacer region. The disordered stretch occupies residues 226 to 246 (GLQPHQGPLASSQPGRSGSIR). The interval 349–692 (EDRGPCDEHG…YMNLYPVARQ (344 aa)) is polymerase/reverse transcriptase domain (RT). Residues 359-602 (EHHIRIPRTP…YSLNFMGYVI (244 aa)) enclose the Reverse transcriptase domain. Residues aspartate 431, aspartate 553, and aspartate 554 each coordinate Mg(2+).

Belongs to the hepadnaviridae P protein family.

The enzyme catalyses DNA(n) + a 2'-deoxyribonucleoside 5'-triphosphate = DNA(n+1) + diphosphate. It carries out the reaction Endonucleolytic cleavage to 5'-phosphomonoester.. Activated by host HSP70 and HSP40 in vitro to be able to bind the epsilon loop of the pgRNA. Because deletion of the RNase H region renders the protein partly chaperone-independent, the chaperones may be needed indirectly to relieve occlusion of the RNA-binding site by this domain. Inhibited by several reverse-transcriptase inhibitors: Lamivudine, Adefovir and Entecavir. Multifunctional enzyme that converts the viral RNA genome into dsDNA in viral cytoplasmic capsids. This enzyme displays a DNA polymerase activity that can copy either DNA or RNA templates, and a ribonuclease H (RNase H) activity that cleaves the RNA strand of RNA-DNA heteroduplexes in a partially processive 3'- to 5'-endonucleasic mode. Neo-synthesized pregenomic RNA (pgRNA) are encapsidated together with the P protein, and reverse-transcribed inside the nucleocapsid. Initiation of reverse-transcription occurs first by binding the epsilon loop on the pgRNA genome, and is initiated by protein priming, thereby the 5'-end of (-)DNA is covalently linked to P protein. Partial (+)DNA is synthesized from the (-)DNA template and generates the relaxed circular DNA (RC-DNA) genome. After budding and infection, the RC-DNA migrates in the nucleus, and is converted into a plasmid-like covalently closed circular DNA (cccDNA). The activity of P protein does not seem to be necessary for cccDNA generation, and is presumably released from (+)DNA by host nuclear DNA repair machinery. The chain is Protein P from Hepatitis B virus genotype A2 subtype adw2 (isolate Germany/991/1990) (HBV-A).